Here is a 295-residue protein sequence, read N- to C-terminus: Indole-3-glycerol phosphate synthase (295 aa).

This sequence belongs to the TrpC family.

The enzyme catalyses 1-(2-carboxyphenylamino)-1-deoxy-D-ribulose 5-phosphate + H(+) = (1S,2R)-1-C-(indol-3-yl)glycerol 3-phosphate + CO2 + H2O. Its pathway is amino-acid biosynthesis; L-tryptophan biosynthesis; L-tryptophan from chorismate: step 4/5. The chain is Indole-3-glycerol phosphate synthase from Prochlorococcus marinus subsp. pastoris (strain CCMP1986 / NIES-2087 / MED4).